A 619-amino-acid polypeptide reads, in one-letter code: ATP-dependent zinc metalloprotease FtsH 1 (619 aa).

The Cytoplasmic segment spans residues 1–8 (MADEKRPA). The chain crosses the membrane as a helical span at residues 9–29 (SRAWLGYLLIAVGILVLSGIV). Topologically, residues 30 to 108 (RSRGRPLVPY…RIEAKSPQTS (79 aa)) are periplasmic. A helical transmembrane segment spans residues 109–129 (VWMQVAIWMLPLVLINAAFFM). Residues 130 to 619 (MLRRAGQGAG…KIAVGPPSAA (490 aa)) are Cytoplasmic-facing. 203-210 (GPPGTGKT) contacts ATP. His426 contacts Zn(2+). Residue Glu427 is part of the active site. Residues His430 and Asp503 each coordinate Zn(2+).

This sequence in the central section; belongs to the AAA ATPase family. The protein in the C-terminal section; belongs to the peptidase M41 family. As to quaternary structure, homohexamer. Zn(2+) is required as a cofactor.

The protein resides in the cell inner membrane. In terms of biological role, acts as a processive, ATP-dependent zinc metallopeptidase for both cytoplasmic and membrane proteins. Plays a role in the quality control of integral membrane proteins. The polypeptide is ATP-dependent zinc metalloprotease FtsH 1 (Sorangium cellulosum (strain So ce56) (Polyangium cellulosum (strain So ce56))).